Reading from the N-terminus, the 304-residue chain is 4-diphosphocytidyl-2-C-methyl-D-erythritol kinase (304 aa).

Lys23 is an active-site residue. Residue 111–121 (PIGGGLGGGSS) coordinates ATP. The active site involves Asp153.

Belongs to the GHMP kinase family. IspE subfamily. As to quaternary structure, homodimer.

It catalyses the reaction 4-CDP-2-C-methyl-D-erythritol + ATP = 4-CDP-2-C-methyl-D-erythritol 2-phosphate + ADP + H(+). It participates in isoprenoid biosynthesis; isopentenyl diphosphate biosynthesis via DXP pathway; isopentenyl diphosphate from 1-deoxy-D-xylulose 5-phosphate: step 3/6. Catalyzes the phosphorylation of the position 2 hydroxy group of 4-diphosphocytidyl-2C-methyl-D-erythritol. The sequence is that of 4-diphosphocytidyl-2-C-methyl-D-erythritol kinase from Wigglesworthia glossinidia brevipalpis.